The following is a 556-amino-acid chain: Probable zinc metalloprotease EGY2, chloroplastic (556 aa).

The transit peptide at 1–64 (MNLAVASFRG…VFRKRETLVR (64 aa)) directs the protein to the chloroplast. A disordered region spans residues 63–133 (VRVTETQTEP…DGDKLEVSSG (71 aa)). The next 7 membrane-spanning stretches (helical) occupy residues 267–287 (AVPE…TLFL), 311–331 (LPGA…HILV), 336–356 (GIKL…FGAI), 374–394 (AAGP…GLFV), 437–457 (PLVI…IPAG), 484–504 (LLGL…LIFF), and 527–547 (LGIL…FAFT).

Belongs to the peptidase M50B family.

Its subcellular location is the plastid. The protein localises to the chloroplast membrane. Functionally, probable membrane-associated metalloprotease that may be involved in chloroplast development. The protein is Probable zinc metalloprotease EGY2, chloroplastic (EGY2) of Arabidopsis thaliana (Mouse-ear cress).